The primary structure comprises 62 residues: Cecropin-A (62 aa).

A signal peptide spans 1-20 (MNLVKILFCVFACLVFTVTA). Positions 21–24 (VPEP) are cleaved as a propeptide — removed by a dipeptidylpeptidase. Threonine 60 is modified (threonine amide).

The protein belongs to the cecropin family.

It localises to the secreted. Its function is as follows. Has antibacterial activity. This Trichoplusia ni (Cabbage looper) protein is Cecropin-A.